Here is a 707-residue protein sequence, read N- to C-terminus: Leucine-rich repeat neuronal protein 3 (707 aa).

Positions 1–22 (MKDAPLQIHVLLGLAITALVQA) are cleaved as a signal peptide. Residues 23–69 (GDKKVDCPQLCTCEIRPWFTPRSIYMEASTVDCNDLGLLNFPARLPA) form the LRRNT domain. Residues 23-626 (GDKKVDCPQL…DGKENGKSHT (604 aa)) are Extracellular-facing. LRR repeat units lie at residues 70–91 (DTQILLLQTNNIARIEHSTDFP), 93–114 (NLTGLDLSQNNLSSVTNINVQK), 117–138 (QLLSVYLEENKLTELPEKCLYG), 141–162 (NLQELYVNHNLLSAISPGAFVG), 165–186 (NLLRLHLNSNRLQMINSKWFEA), 189–210 (NLEILMLGDNPILRIKDMNFQP), 213–234 (KLRSLVIAGINLTEVPDDALVG), 237–258 (NLESISFYDNRLNKVPQVALQK), 261–282 (NLKFLDLNKNPINRIRRGDFSN), 285–304 (HLKELGINNMPELVSIDSLA), 310–332 (DLRKIEATNNPRLSYIHPNAFFR), and 335–358 (KLESLMLNSNALSALYHGTIESLP). 2 N-linked (GlcNAc...) asparagine glycosylation sites follow: Asn93 and Asn103. A glycan (N-linked (GlcNAc...) asparagine) is linked at Asn223. The LRRCT domain maps to 368–421 (NPIRCDCVIRWINMNKTNIRFMEPDSLFCVDPPEFQGQNVRQVHFRDMMEICLP). N-linked (GlcNAc...) asparagine glycosylation is present at Asn382. One can recognise an Ig-like C2-type domain in the interval 421–514 (PLIAPESFPS…DLKSIMIKVG (94 aa)). A disulfide bond links Cys444 and Cys496. 3 N-linked (GlcNAc...) asparagine glycosylation sites follow: Asn522, Asn579, and Asn608. A Fibronectin type-III domain is found at 523-614 (GSLNIKIRDI…QCVNVTTKSL (92 aa)). The helical transmembrane segment at 627–647 (VFVACVGGLLGIIGVMCLFGC) threads the bilayer. Topologically, residues 648–707 (VSQEGNCENEHSYTVNHCHKPTLAFSELYPPLINLWESSKEKPASLEVKATAIGVPTSMS) are cytoplasmic.

The protein localises to the membrane. The chain is Leucine-rich repeat neuronal protein 3 (Lrrn3) from Rattus norvegicus (Rat).